The following is a 98-amino-acid chain: NADH-ubiquinone oxidoreductase chain 4L (98 aa).

Helical transmembrane passes span 1 to 21 (MPPIYMNIILAFTLSLMGMLV), 29 to 49 (SLLCLEGMMLSLFILGTTMAL), and 61 to 81 (IVLLVFAACEAAVGLSLLVMV).

This sequence belongs to the complex I subunit 4L family. As to quaternary structure, core subunit of respiratory chain NADH dehydrogenase (Complex I) which is composed of 45 different subunits.

It localises to the mitochondrion inner membrane. The catalysed reaction is a ubiquinone + NADH + 5 H(+)(in) = a ubiquinol + NAD(+) + 4 H(+)(out). In terms of biological role, core subunit of the mitochondrial membrane respiratory chain NADH dehydrogenase (Complex I) which catalyzes electron transfer from NADH through the respiratory chain, using ubiquinone as an electron acceptor. Part of the enzyme membrane arm which is embedded in the lipid bilayer and involved in proton translocation. The sequence is that of NADH-ubiquinone oxidoreductase chain 4L (MT-ND4L) from Orycteropus afer (Aardvark).